The primary structure comprises 292 residues: Formamidopyrimidine-DNA glycosylase (292 aa).

Residue proline 2 is the Schiff-base intermediate with DNA of the active site. The active-site Proton donor is the glutamate 3. Lysine 58 (proton donor; for beta-elimination activity) is an active-site residue. Positions 98, 128, and 173 each coordinate DNA. The FPG-type zinc finger occupies 258–292 (LVYDRAGQPCRVCATPVRQIVQGQRSTFYCPNCQH). Arginine 282 acts as the Proton donor; for delta-elimination activity in catalysis.

Belongs to the FPG family. In terms of assembly, monomer. Zn(2+) is required as a cofactor.

The catalysed reaction is Hydrolysis of DNA containing ring-opened 7-methylguanine residues, releasing 2,6-diamino-4-hydroxy-5-(N-methyl)formamidopyrimidine.. It carries out the reaction 2'-deoxyribonucleotide-(2'-deoxyribose 5'-phosphate)-2'-deoxyribonucleotide-DNA = a 3'-end 2'-deoxyribonucleotide-(2,3-dehydro-2,3-deoxyribose 5'-phosphate)-DNA + a 5'-end 5'-phospho-2'-deoxyribonucleoside-DNA + H(+). In terms of biological role, involved in base excision repair of DNA damaged by oxidation or by mutagenic agents. Acts as a DNA glycosylase that recognizes and removes damaged bases. Has a preference for oxidized purines, such as 7,8-dihydro-8-oxoguanine (8-oxoG). Has AP (apurinic/apyrimidinic) lyase activity and introduces nicks in the DNA strand. Cleaves the DNA backbone by beta-delta elimination to generate a single-strand break at the site of the removed base with both 3'- and 5'-phosphates. The protein is Formamidopyrimidine-DNA glycosylase of Cupriavidus necator (strain ATCC 17699 / DSM 428 / KCTC 22496 / NCIMB 10442 / H16 / Stanier 337) (Ralstonia eutropha).